The following is a 466-amino-acid chain: Exodeoxyribonuclease 7 large subunit (466 aa).

This sequence belongs to the XseA family. As to quaternary structure, heterooligomer composed of large and small subunits.

Its subcellular location is the cytoplasm. It carries out the reaction Exonucleolytic cleavage in either 5'- to 3'- or 3'- to 5'-direction to yield nucleoside 5'-phosphates.. In terms of biological role, bidirectionally degrades single-stranded DNA into large acid-insoluble oligonucleotides, which are then degraded further into small acid-soluble oligonucleotides. The chain is Exodeoxyribonuclease 7 large subunit from Vesicomyosocius okutanii subsp. Calyptogena okutanii (strain HA).